Consider the following 393-residue polypeptide: Protein TsgA homolog (393 aa).

The next 12 helical transmembrane spans lie at 11–31 (WISF…GMVM), 51–71 (FLNA…EIIP), 78–98 (FGFV…SLAL), 101–121 (AAMF…TFLI), 134–154 (LLFT…VAAY), 162–182 (WYWV…LTFG), 206–226 (IGVL…LGFI), 245–265 (TLVS…SFIL), 273–293 (ILTV…KAQP), 297–317 (AWFI…IITL), 332–352 (FVLT…GPIV), and 361–381 (LLTA…LGFV).

This sequence belongs to the major facilitator superfamily. TsgA family.

The protein resides in the cell inner membrane. This chain is Protein TsgA homolog, found in Citrobacter koseri (strain ATCC BAA-895 / CDC 4225-83 / SGSC4696).